Consider the following 377-residue polypeptide: 1,3,6,8-tetrahydroxynaphthalene synthase (377 aa).

Cys-164 is a catalytic residue.

It belongs to the thiolase-like superfamily. Chalcone/stilbene synthases family. In terms of assembly, homodimer.

The enzyme catalyses 5 malonyl-CoA + 5 H(+) = naphthalene-1,3,6,8-tetrol + 5 CO2 + 5 CoA + H2O. The protein operates within pigment biosynthesis; melanin biosynthesis. Functionally, involved in the biosynthesis of melanin but also various secondary metabolites containing a naphthoquinone ring. Catalyzes the iterative condensation of five CoA-linked malonyl units to form a pentaketide intermediate. THNS subsequently catalyzes the dual intramolecular Claisen and aldol condensations of this linear intermediate to produce the fused ring of 1,3,6,8-tetrahydroxynaphthalene (THN). The chain is 1,3,6,8-tetrahydroxynaphthalene synthase from Streptomyces peucetius subsp. caesius.